The chain runs to 92 residues: Small ribosomal subunit protein uS19 (92 aa).

This sequence belongs to the universal ribosomal protein uS19 family.

Its function is as follows. Protein S19 forms a complex with S13 that binds strongly to the 16S ribosomal RNA. The sequence is that of Small ribosomal subunit protein uS19 from Lactococcus lactis subsp. cremoris (strain MG1363).